Here is a 459-residue protein sequence, read N- to C-terminus: Glycosyl hydrolase family 109 protein 1 (459 aa).

Positions 1-31 (MHNIHRRHFLKAAGAVTAGLVTANIALNANA) form a signal peptide, tat-type signal. Residues 64-65 (ER), D86, 135-138 (WEWH), 155-156 (EV), and N184 contribute to the NAD(+) site. Residues Y213, R232, 244-247 (YPTH), and Y326 each bind substrate. An NAD(+)-binding site is contributed by Y244.

It belongs to the Gfo/Idh/MocA family. Glycosyl hydrolase 109 subfamily. It depends on NAD(+) as a cofactor. In terms of processing, predicted to be exported by the Tat system. The position of the signal peptide cleavage has not been experimentally proven.

Its function is as follows. Glycosidase. This Shewanella sp. (strain ANA-3) protein is Glycosyl hydrolase family 109 protein 1.